The following is a 386-amino-acid chain: O-methyltransferase aunE (386 aa).

S-adenosyl-L-methionine is bound at residue Trp-200. Residue His-299 is the Proton acceptor of the active site.

It belongs to the class I-like SAM-binding methyltransferase superfamily. Cation-independent O-methyltransferase family.

Its pathway is secondary metabolite biosynthesis. Its function is as follows. O-methyltransferase; part of the gene cluster that mediates the biosynthesis of aurasperone B, a dimeric gamma-naphthopyrone. The first step in the biosynthesis of aurasperone B is the production of gamma-naphthopyrone precursor YWA1 by the non-reducing polyketide synthase albA, via condensation of one acetyl-CoA starter unit with 6 malonyl-CoA units. YWA1 is then methylated by aunE at position C-6 to yield foncesin which is further methylated at position C-8 by aunD to produce fonsecin B. A key enzyme in the biosynthetic pathway is the cytochrome P450 monooxygenase aunB which catalyzes the oxidative dimerization of fonsecin B to aurasperone B. AunB also catalyzes the oxidative dimerization of rubrofusarin B into aurasperone A. This chain is O-methyltransferase aunE, found in Aspergillus niger (strain ATCC MYA-4892 / CBS 513.88 / FGSC A1513).